The following is a 324-amino-acid chain: NADH-quinone oxidoreductase subunit H (324 aa).

8 consecutive transmembrane segments (helical) span residues 11–31 (ILITVGKAVVILLVVVTCGAF), 81–101 (VIFTLAPMIAFTSMLIAFAIV), 114–134 (IGILFFLMMAGLAVYAVLFAG), 154–174 (VSYEVFIGLSLMGVVAQAGSF), 186–206 (LWNVIPQFFGFITFAIAGVAV), 237–257 (FFVGEYIGIVTVSALMVTLFF), 265–285 (LPPFVWFALKTGFFMMMFILI), and 304–324 (VCLPITLLNLLATAAVILYNA).

The protein belongs to the complex I subunit 1 family. NDH-1 is composed of 13 different subunits. Subunits NuoA, H, J, K, L, M, N constitute the membrane sector of the complex.

It localises to the cell inner membrane. The enzyme catalyses a quinone + NADH + 5 H(+)(in) = a quinol + NAD(+) + 4 H(+)(out). Functionally, NDH-1 shuttles electrons from NADH, via FMN and iron-sulfur (Fe-S) centers, to quinones in the respiratory chain. The immediate electron acceptor for the enzyme in this species is believed to be ubiquinone. Couples the redox reaction to proton translocation (for every two electrons transferred, four hydrogen ions are translocated across the cytoplasmic membrane), and thus conserves the redox energy in a proton gradient. This subunit may bind ubiquinone. This Pectobacterium atrosepticum (strain SCRI 1043 / ATCC BAA-672) (Erwinia carotovora subsp. atroseptica) protein is NADH-quinone oxidoreductase subunit H.